We begin with the raw amino-acid sequence, 199 residues long: VAMP-like protein YKT62 (199 aa).

In terms of domain architecture, Longin spans 7-131 (LVLKCDPETR…PYLKEASDKF (125 aa)). Residues 139–199 (KLLKIQRELD…KKTNSCCTLL (61 aa)) enclose the v-SNARE coiled-coil homology domain. The S-palmitoyl cysteine moiety is linked to residue Cys-195. At Cys-196 the chain carries Cysteine methyl ester. Residue Cys-196 is the site of S-geranylgeranyl cysteine attachment. The propeptide at 197–199 (TLL) is removed in mature form.

This sequence belongs to the synaptobrevin family. As to quaternary structure, interacts with SYP41. Core constituent of the SNARE complex required for membrane fusion at the trans-Golgi network.

It is found in the cell membrane. Involved in the secretory pathway. Essential for membrane fusion mediated by either SYP41 or SYP61; triggers the fusion of phospholipid vesicles containing SYP41 or SYP61 and VTI12. The protein is VAMP-like protein YKT62 of Arabidopsis thaliana (Mouse-ear cress).